An 80-amino-acid polypeptide reads, in one-letter code: Exodeoxyribonuclease 7 small subunit (80 aa).

Belongs to the XseB family. In terms of assembly, heterooligomer composed of large and small subunits.

Its subcellular location is the cytoplasm. The enzyme catalyses Exonucleolytic cleavage in either 5'- to 3'- or 3'- to 5'-direction to yield nucleoside 5'-phosphates.. Bidirectionally degrades single-stranded DNA into large acid-insoluble oligonucleotides, which are then degraded further into small acid-soluble oligonucleotides. The polypeptide is Exodeoxyribonuclease 7 small subunit (Escherichia coli O139:H28 (strain E24377A / ETEC)).